The chain runs to 113 residues: Large ribosomal subunit protein uL22 (113 aa).

Belongs to the universal ribosomal protein uL22 family. In terms of assembly, part of the 50S ribosomal subunit.

Its function is as follows. This protein binds specifically to 23S rRNA; its binding is stimulated by other ribosomal proteins, e.g. L4, L17, and L20. It is important during the early stages of 50S assembly. It makes multiple contacts with different domains of the 23S rRNA in the assembled 50S subunit and ribosome. Functionally, the globular domain of the protein is located near the polypeptide exit tunnel on the outside of the subunit, while an extended beta-hairpin is found that lines the wall of the exit tunnel in the center of the 70S ribosome. This is Large ribosomal subunit protein uL22 from Chloroflexus aggregans (strain MD-66 / DSM 9485).